Here is a 248-residue protein sequence, read N- to C-terminus: Pulmonary surfactant-associated protein A (248 aa).

The N-terminal stretch at 1 to 20 (MSLCSLAFTLFLTVVAGIKC) is a signal peptide. In terms of domain architecture, Collagen-like spans 28-100 (GSPGIPGAPG…PGERGLPGFP (73 aa)). Residues P30, P33, P36, P42, P54, P57, P63, P67, P70, and P76 each carry the 4-hydroxyproline modification. Residues 31–99 (GIPGAPGNHG…EPGERGLPGF (69 aa)) form a disordered region. The segment covering 42 to 51 (PGRDGRDGVK) has biased composition (basic and acidic residues). Residues 54 to 65 (PGPPGPMGPPGG) are compositionally biased toward pro residues. The span at 69–82 (LPGRDGLPGAPGAP) shows a compositional bias: low complexity. The segment covering 84-93 (ERGDKGEPGE) has biased composition (basic and acidic residues). Residues 133–248 (SVGDKVFSTN…LQYRLAVCEF (116 aa)) enclose the C-type lectin domain. Disulfide bonds link C155–C246 and C224–C238. N207 carries N-linked (GlcNAc...) asparagine glycosylation. The Ca(2+) site is built by E215, R217, N234, and D235.

This sequence belongs to the SFTPA family. Oligomeric complex of 6 set of homotrimers.

The protein localises to the secreted. It is found in the extracellular space. The protein resides in the extracellular matrix. It localises to the surface film. Its function is as follows. In presence of calcium ions, it binds to surfactant phospholipids and contributes to lower the surface tension at the air-liquid interface in the alveoli of the mammalian lung and is essential for normal respiration. Enhances the expression of MYO18A/SP-R210 on alveolar macrophages. In Rattus norvegicus (Rat), this protein is Pulmonary surfactant-associated protein A (Sftpa1).